Consider the following 420-residue polypeptide: Serine hydroxymethyltransferase (420 aa).

(6S)-5,6,7,8-tetrahydrofolate contacts are provided by residues Leu121 and 125–127; that span reads GHL. Lys230 is subject to N6-(pyridoxal phosphate)lysine. (6S)-5,6,7,8-tetrahydrofolate contacts are provided by residues Glu246 and 354 to 356; that span reads SPF.

This sequence belongs to the SHMT family. Homodimer. The cofactor is pyridoxal 5'-phosphate.

It localises to the cytoplasm. The catalysed reaction is (6R)-5,10-methylene-5,6,7,8-tetrahydrofolate + glycine + H2O = (6S)-5,6,7,8-tetrahydrofolate + L-serine. It participates in one-carbon metabolism; tetrahydrofolate interconversion. It functions in the pathway amino-acid biosynthesis; glycine biosynthesis; glycine from L-serine: step 1/1. Catalyzes the reversible interconversion of serine and glycine with tetrahydrofolate (THF) serving as the one-carbon carrier. This reaction serves as the major source of one-carbon groups required for the biosynthesis of purines, thymidylate, methionine, and other important biomolecules. Also exhibits THF-independent aldolase activity toward beta-hydroxyamino acids, producing glycine and aldehydes, via a retro-aldol mechanism. This Rickettsia akari (strain Hartford) protein is Serine hydroxymethyltransferase.